The sequence spans 471 residues: MENLKHIITLGQVIHKRCEEMKYCKKQCRRLGHRVLGLIKPLEMLQDQGKRSVPSEKLTTAMNRFKAALEEANGEIEKFSNRSNICRFLTASQDKILFKDVNRKLSDVWKELSLLLQVEQRMPVSPISQGASWAQEDQQDADEDRRAFQMLRRDNEKIEASLRRLEINMKEIKETLRQYLPPKCMQEIPQEQIKEIKKEQLSGSPWILLRENEVSTLYKGEYHRAPVAIKVFKKLQAGSIAIVRQTFNKEIKTMKKFESPNILRIFGICIDETVTPPQFSIVMEYCELGTLRELLDREKDLTLGKRMVLVLGAARGLYRLHHSEAPELHGKIRSSNFLVTQGYQVKLAGFELRKTQTSMSLGTTREKTDRVKSTAYLSPQELEDVFYQYDVKSEIYSFGIVLWEIATGDIPFQGCNSEKIRKLVAVKRQQEPLGEDCPSELREIIDECRAHDPSVRPSVDEILKKLSTFSK.

An N-terminal bundle and brace (NBB); mediates INSP6 binding region spans residues 1–149 (MENLKHIITL…DADEDRRAFQ (149 aa)). Residues 55–84 (SEKLTTAMNRFKAALEEANGEIEKFSNRSN) are a coiled coil. S125 carries the phosphoserine modification. Residues 139 to 180 (QDADEDRRAFQMLRRDNEKIEASLRRLEINMKEIKETLRQYL) adopt a coiled-coil conformation. Positions 194 to 469 (KEIKKEQLSG…DEILKKLSTF (276 aa)) constitute a Protein kinase domain. ATP-binding positions include 209–217 (LRENEVSTL) and K230. The residue at position 357 (T357) is a Phosphothreonine; by RIPK3. S358 and S360 each carry phosphoserine; by RIPK3.

The protein belongs to the protein kinase superfamily. In terms of assembly, homooligomer. Homotrimer; forms homotrimers on necroptosis induction. Upon TNF-induced necrosis, forms in complex with PGAM5, RIPK1 and RIPK3. Within this complex, may play a role in the proper targeting of RIPK1-RIPK3 to its downstream effector PGAM5. Interacts with RIPK3; the interaction is direct and promotes its phosphorylation and subsequent activation. Post-translationally, phosphorylation by RIPK3 induces a conformational switch that is required for necroptosis. It also induces homotrimerization and localization to the plasma membrane.

It is found in the cytoplasm. Its subcellular location is the cell membrane. The protein resides in the nucleus. Its activity is regulated as follows. Activated via binding to highly phosphorylated inositol phosphates such as inositolhexakisphosphate (InsP6) which mediates the release of an N-terminal auto-inhibitory region. Activation requires not only RIPK3-dependent phosphorylation but also binding to highly phosphorylated inositol phosphates. Inhibited by necrosulfonamide, a specific inhibitor of necroptosis that targets Cys-86. Pseudokinase that plays a key role in TNF-induced necroptosis, a programmed cell death process. Does not have protein kinase activity. Activated following phosphorylation by RIPK3, leading to homotrimerization, localization to the plasma membrane and execution of programmed necrosis characterized by calcium influx and plasma membrane damage. In addition to TNF-induced necroptosis, necroptosis can also take place in the nucleus in response to orthomyxoviruses infection: following activation by ZBP1, MLKL is phosphorylated by RIPK3 in the nucleus, triggering disruption of the nuclear envelope and leakage of cellular DNA into the cytosol.following ZBP1 activation, which senses double-stranded Z-RNA structures, nuclear RIPK3 catalyzes phosphorylation and activation of MLKL, promoting disruption of the nuclear envelope and leakage of cellular DNA into the cytosol. Binds to highly phosphorylated inositol phosphates such as inositolhexakisphosphate (InsP6) which is essential for its necroptotic function. In Homo sapiens (Human), this protein is Mixed lineage kinase domain-like protein.